An 863-amino-acid chain; its full sequence is Dipeptidyl peptidase 9 (863 aa).

Residues 1–20 are disordered; it reads MATTGTPTADRGDAAATDDP. Ala-2 carries the N-acetylalanine modification. Catalysis depends on charge relay system residues Ser-730, Asp-808, and His-840. Ser-730 lines the Val-boroPro pocket.

It belongs to the peptidase S9B family. DPPIV subfamily. Homodimer. Forms a ternary complex with NLRP1, composed of a DPP9 homodimer, one full-length NLRP1 protein, and one cleaved C-terminus of NLRP1 (NACHT, LRR and PYD domains-containing protein 1, C-terminus). Forms a ternary complex with CARD8, composed of a DPP9 homodimer, one full-length NLRP1 protein, and one cleaved C-terminus of CARD8 (Caspase recruitment domain-containing protein 8, C-terminus). In the ternary complex, only one subunit of the DPP9 homodimer is bound to NLRP1 or CARD8. Ubiquitously expressed, with highest levels in liver, heart and muscle, and lowest levels in brain.

The protein resides in the cytoplasm. Its subcellular location is the cytosol. It localises to the nucleus. The catalysed reaction is Release of an N-terminal dipeptide, Xaa-Yaa-|-Zaa-, from a polypeptide, preferentially when Yaa is Pro, provided Zaa is neither Pro nor hydroxyproline.. Its activity is regulated as follows. Inhibited by the serine proteinase inhibitor 4-(2-aminoethyl)benzenesulphonyl fluoride (AEBSF), and by di-isopropylfluorophosphate. Inhibited by Val-boroPro (Talabostat, PT-100), a non-selective inhibitor, which triggers pyroptosis in monocytes and macrophages. Val-boroPro inhibits activity by binding to the active site, mimicking a substrate-bound state, thereby displacing the C-terminal fragment of NLRP1, leading to activation of the NLRP1 inflammasome. In contrast, Val-boroPro does not directly displaces CARD8: it acts by promoting degradation of the N-terminal part of CARD8, leading to indirect disruption of the ternary complex. Chemical inhibition of DPP9 by Val-boroPro in HIV-1-infected cells activates the CARD8 inflammasome, triggering cell death, offering a promising strategy for the elimination of HIV-1 reservoirs in people living with HIV-1. Functionally, dipeptidyl peptidase that cleaves off N-terminal dipeptides from proteins having a Pro or Ala residue at position 2. Acts as a key inhibitor of caspase-1-dependent monocyte and macrophage pyroptosis in resting cells by preventing activation of NLRP1 and CARD8. Sequesters the cleaved C-terminal part of NLRP1 and CARD8, which respectively constitute the active part of the NLRP1 and CARD8 inflammasomes, in a ternary complex, thereby preventing their oligomerization and activation. The dipeptidyl peptidase activity is required to suppress NLRP1 and CARD8; however, neither NLRP1 nor CARD8 are bona fide substrates of DPP9, suggesting the existence of substrate(s) required for NLRP1 and CARD8 inhibition. The chain is Dipeptidyl peptidase 9 from Homo sapiens (Human).